The sequence spans 865 residues: Protein fluG (865 aa).

Residues 442-533 enclose the GS beta-grasp domain; sequence PGVKYVWTQF…VMTWWKSEQG (92 aa). One can recognise a GS catalytic domain in the interval 540–865; sequence PRTNLLNINN…ARRKWLVERY (326 aa).

This sequence belongs to the glutamine synthetase family.

It localises to the cytoplasm. In terms of biological role, may function as a GSI-related enzyme in synthesizing a small diffusible factor that acts as an extracellular signal directing asexual sporulation and perhaps other aspects of colony growth. May be involved in brlA activation (an early transcriptional regulator for conidiation specific gene). This chain is Protein fluG (fluG), found in Emericella nidulans (strain FGSC A4 / ATCC 38163 / CBS 112.46 / NRRL 194 / M139) (Aspergillus nidulans).